A 348-amino-acid chain; its full sequence is MFLQRCMSFLQCIFAAVLAWIGVRGQQVHGASQFSSTGKVNPATIKVVNNVISQASATPSSVNYHFTRQCNYKCGFCFHTAKTSFVLPIEEAKRGLQLLKESGLEKINFSGGEPFIHDRGDFLGKLVQYCKHDLQLPSVSIVSNGSMIREKWFQTYGEYLDILAISCDSFDEDTNQTIGRAQGRKSHLDNLFKVRDWCRKYKVAFKINSVINTFNVDEDMRENITELNPVRWKVFQCLLIDGENAGENSLREAERFLISDQQFQDFLERHSSISCLVPESNQKMRDSYLILDEYMRFLDCREGRKDPSKSILDVGVEEAIQFSGFDEKMFLKRGGKYVWSKADMRLEW.

Residues 56-276 (SATPSSVNYH…LERHSSISCL (221 aa)) enclose the Radical SAM core domain. [4Fe-4S] cluster contacts are provided by Cys-70, Cys-74, and Cys-77.

It belongs to the radical SAM superfamily. RSAD2 family. It depends on [4Fe-4S] cluster as a cofactor. Expressed at low levels in spleen and head kidney.

The protein resides in the endoplasmic reticulum membrane. Its function is as follows. Interferon-inducible iron-sulfur (4FE-4S) cluster-binding antiviral protein which plays a major role in the cell antiviral state induced by type I and type II interferon. This Oncorhynchus mykiss (Rainbow trout) protein is S-adenosylmethionine-dependent nucleotide dehydratase RSAD2.